The primary structure comprises 319 residues: Beta-ketoacyl-[acyl-carrier-protein] synthase III (319 aa).

Catalysis depends on residues C113 and H246. Residues 247–251 (QANIR) form an ACP-binding region. N276 is an active-site residue.

This sequence belongs to the thiolase-like superfamily. FabH family. Homodimer.

It is found in the cytoplasm. The enzyme catalyses malonyl-[ACP] + acetyl-CoA + H(+) = 3-oxobutanoyl-[ACP] + CO2 + CoA. Its pathway is lipid metabolism; fatty acid biosynthesis. Its function is as follows. Catalyzes the condensation reaction of fatty acid synthesis by the addition to an acyl acceptor of two carbons from malonyl-ACP. Catalyzes the first condensation reaction which initiates fatty acid synthesis and may therefore play a role in governing the total rate of fatty acid production. Possesses both acetoacetyl-ACP synthase and acetyl transacylase activities. Its substrate specificity determines the biosynthesis of branched-chain and/or straight-chain of fatty acids. This chain is Beta-ketoacyl-[acyl-carrier-protein] synthase III, found in Ehrlichia chaffeensis (strain ATCC CRL-10679 / Arkansas).